Reading from the N-terminus, the 228-residue chain is Sugar fermentation stimulation protein homolog (228 aa).

Belongs to the SfsA family.

This chain is Sugar fermentation stimulation protein homolog, found in Desulfitobacterium hafniense (strain Y51).